The chain runs to 434 residues: Tubulin gamma chain (434 aa).

GTP is bound at residue 135–141 (AGGTGSG).

Belongs to the tubulin family.

The protein resides in the cytoplasm. It is found in the cytoskeleton. The protein localises to the microtubule organizing center. Its subcellular location is the spindle pole body. In terms of biological role, tubulin is the major constituent of microtubules. The gamma chain is found at microtubule organizing centers (MTOC) such as the spindle poles or the centrosome, suggesting that it is involved in the minus-end nucleation of microtubule assembly. The sequence is that of Tubulin gamma chain (TUB4) from Encephalitozoon cuniculi (strain GB-M1) (Microsporidian parasite).